Consider the following 313-residue polypeptide: Methylenetetrahydrofolate dehydrogenase [NAD(+)] (313 aa).

The active site involves C152. Residues 187-188 (RS), 210-211 (DI), and 270-272 (FAG) contribute to the NAD(+) site.

This sequence belongs to the tetrahydrofolate dehydrogenase/cyclohydrolase family. Homodimer.

It carries out the reaction (6R)-5,10-methylene-5,6,7,8-tetrahydrofolate + NAD(+) = (6R)-5,10-methenyltetrahydrofolate + NADH. It participates in one-carbon metabolism; tetrahydrofolate interconversion. Functionally, catalyzes oxidation of cytoplasmic one-carbon units for purine biosynthesis. In Dictyostelium discoideum (Social amoeba), this protein is Methylenetetrahydrofolate dehydrogenase [NAD(+)] (thfA).